An 85-amino-acid chain; its full sequence is Serine protease inhibitor Kazal-type 7 (85 aa).

The signal sequence occupies residues 1-19; that stretch reads MKITGGLLLLCTVVYFCSS. One can recognise a Kazal-like domain in the interval 26 to 85; sequence SPKKVDCSIYKKYPVVAIPCPITYLPVCGSDYITYGNECHLCTESLKSNGRVQFLHDGSC. Disulfide bonds link Cys-32-Cys-67, Cys-45-Cys-64, and Cys-53-Cys-85.

It localises to the secreted. Probable serine protease inhibitor. The polypeptide is Serine protease inhibitor Kazal-type 7 (SPINK7) (Homo sapiens (Human)).